A 321-amino-acid chain; its full sequence is MKFVLAIASLLVLSTVYARPASIKTFEEFKKAFNKNYATVEEEEVARKNFLESLKYVEANKGAINHLSDLSLDEFKNRYLMSAEAFEQLKTQFDLNAETSACRINSVNVPSELDLRSLRTVTPIRMQGGCGSCWAFSGVAATESAYLAYRNTSLDLSEQELVDCASQHGCHGDTIPRGIEYIQQNGVVEERSYPYVAREQRCRRPNSQHYGISNYCQIYPPDVKQIREALTQTHTAIAVIIGIKDLRAFQHYDGRTIIQHDNGYQPNYHAVNIVGYGSTQGDDYWIVRNSWDTTWGDSGYGYFQAGNNLMMIEQYPYVVIM.

The N-terminal stretch at M1–A18 is a signal peptide. The propeptide at R19–E98 is activation peptide. Cystine bridges form between C102/C216, C130/C170, and C164/C202. The active site involves C133. N151 is a glycosylation site (N-linked (GlcNAc...) asparagine). Residues H269 and R288 contribute to the active site.

The protein belongs to the peptidase C1 family. As to quaternary structure, monomer.

It is found in the secreted. The catalysed reaction is Broad endopeptidase specificity.. Functionally, thiol protease that hydrolyzes proteins, with a preference for Phe or basic residues. The polypeptide is Peptidase 1 (DERF1) (Dermatophagoides farinae (American house dust mite)).